A 1105-amino-acid chain; its full sequence is MTVTKPRSVQSRHISRYDWVPAAAGWAVGVIATLSLLASISPLVRWIIKVPREFINSYLFNFPDTSFAWSFVLALLAAALAARKRIAWLLLLTNVVLAAFLNAADIAAGGNTAAQNFGENLGFEVHVVAIVVLVLGYRQFWTKVRRGALFKAAAVLVAGGAIGILVSWGLVDLFPGSLAPHDRLPYVANRVIGFALADPDLFTGRPHVFLNAMFGLFGALALIAATIVLFQSQRADNALTGEDESAIRGLLELYGNSDSLGYFATRRDKSVIFASSGRAAITYRVEIGVCLASGDPVGDPRSWQQAIDAWLRLCQTYGWSPGVMGASSQGAKAYREAGLNALELGDEAILVPADFTLSGPDMRGVRQAVTRARRAGLTVRIRRHRDISGAEMEQTIDRADGWRDTESERGFSMALGRLGDPADTDCLLVEALDPDDLVVAMLSLVPWGTSGVSLDLMRRSPQSPNGTIELMVSELALRAEGLGISRISLNFAMFRSAFEQGAQLGAGPVARLWRWLLVFFSRWWQIETLYRSNQKYQPQWVPRYACYEDARVIPKVGVASVIAEGFLVLPFSRRNKVHTGHHPAVPERLAATGLLHHDGSAPDVSGLRQSAIADGDDPQRRLPEQVRVRLNKLKKLRSSGIDAYPVGEPPTHTVAQAMDADDQASVSVSGRILRVRNYGGVLFAHLRDWSGEIQVLLDNSRLGQGRAADFNAAIDLGDLVEMTGQMGSSKTGTRSLIVRRWRLIGKCLRPLPNKWNGLTDPEARVRTRYVDLAVNAESRTLITARSAVLRSVRETLSAKGFIEVETPILQQVHGGATARPFITHINTYSMDLFLRIAPELYLKRLCVGGVERVFELGRAFRNEGVDFSHNPEFTLLEAYQAHADYRVWIDSCRELIQNAAQAANGAPVAMRPAGGGRLEPVGISGVWAVKTVHDAVSEALGEQIDADTDLATLRRLADAARIPYRAQWDAGAVVLELYEHLVESRTEQPTFYLDFPTSVSPLTRPHRSKPGIAERWDLVAWGVELGTAYSELTDPVEQRLRLEEQSLLAAGGDPEAMQLDEDFLQAMEYAMPPTGGLGMGVDRVVMLITGRSIRETLPFPLAKPH.

The segment at 1–603 (MTVTKPRSVQ…LLHHDGSAPD (603 aa)) is phosphatidylglycerol lysyltransferase. 7 helical membrane-spanning segments follow: residues 20 to 40 (VPAA…LASI), 62 to 82 (FPDT…ALAA), 86 to 106 (IAWL…AADI), 117 to 137 (FGEN…VLGY), 154 to 174 (AVLV…VDLF), 186 to 203 (YVAN…DLFT), and 208 to 228 (VFLN…ATIV). The interval 604–1105 (VSGLRQSAIA…TLPFPLAKPH (502 aa)) is lysine--tRNA ligase. D1017 and E1024 together coordinate Mg(2+).

The protein in the N-terminal section; belongs to the LPG synthetase family. In the C-terminal section; belongs to the class-II aminoacyl-tRNA synthetase family. Mg(2+) serves as cofactor.

Its subcellular location is the cell membrane. It carries out the reaction tRNA(Lys) + L-lysine + ATP = L-lysyl-tRNA(Lys) + AMP + diphosphate. The catalysed reaction is L-lysyl-tRNA(Lys) + a 1,2-diacyl-sn-glycero-3-phospho-(1'-sn-glycerol) = a 1,2-diacyl-sn-glycero-3-phospho-1'-(3'-O-L-lysyl)-sn-glycerol + tRNA(Lys). Functionally, catalyzes the production of L-lysyl-tRNA(Lys)transfer and the transfer of a lysyl group from L-lysyl-tRNA(Lys) to membrane-bound phosphatidylglycerol (PG), which produces lysylphosphatidylglycerol (LPG), one of the components of the bacterial membrane with a positive net charge. LPG synthesis contributes to the resistance to cationic antimicrobial peptides (CAMPs) and likely protects M.tuberculosis against the CAMPs produced by competiting microorganisms (bacteriocins). In fact, the modification of anionic phosphatidylglycerol with positively charged L-lysine results in repulsion of the peptides. This Mycobacterium ulcerans (strain Agy99) protein is Lysylphosphatidylglycerol biosynthesis bifunctional protein LysX (lysX).